The sequence spans 201 residues: RILP-like protein 2 (201 aa).

The RH1 domain maps to 14 to 108 (SPEMALDKDP…LRDGPQMGVG (95 aa)). The stretch at 67 to 155 (LEMLEALVNQ…AQDELQCYKS (89 aa)) forms a coiled coil. The RH2 domain occupies 121–197 (RPRFTLQELR…TVKSLFSFKQ (77 aa)). The interval 175–201 (TSSPRSNASKEKSTVKSLFSFKQGKNT) is disordered.

This sequence belongs to the RILPL family.

It localises to the cytoplasm. The protein localises to the cytosol. The protein resides in the cytoskeleton. It is found in the microtubule organizing center. Its subcellular location is the centrosome. It localises to the cell projection. The protein localises to the cilium. Its function is as follows. Involved in cell shape and neuronal morphogenesis, positively regulating the establishment and maintenance of dendritic spines. Plays a role in cellular protein transport. This Xenopus laevis (African clawed frog) protein is RILP-like protein 2 (rilpl2).